A 244-amino-acid chain; its full sequence is 5-oxoprolinase subunit A (244 aa).

This sequence belongs to the LamB/PxpA family. In terms of assembly, forms a complex composed of PxpA, PxpB and PxpC.

The enzyme catalyses 5-oxo-L-proline + ATP + 2 H2O = L-glutamate + ADP + phosphate + H(+). Catalyzes the cleavage of 5-oxoproline to form L-glutamate coupled to the hydrolysis of ATP to ADP and inorganic phosphate. The polypeptide is 5-oxoprolinase subunit A (Escherichia coli O6:K15:H31 (strain 536 / UPEC)).